Here is an 828-residue protein sequence, read N- to C-terminus: MTRSPLHRLIFGGLRRLLYLWVRSETINQSSMTLNLDRSRPVFYALPSPALTDLAVLDHECTKAGLPRPVLPVAVGPLQEPAAFFYLTPDPDWLGRQDKSGAPPTLERLVAAVSQHAEEDAQIIPVSVFWGQTPASESSPWKLLFADSWAVTGRLRRLLTVLILGRKTRVQFSAPIHLRELVQHNKGHERTVRMAQRLMRVHFRNLKTAVIGPDISHRRTLVKGLVHAPQVRQAIADEAQRENLPLAKAEAQALRYGNEIASDYTYTAIRFLEVVLSWFWNKIYDGIKVNHIEQVQGIAPGHEVIYVPCHRSHIDYLLLSYLLFRNGLTPPHVAAGINLNMPVVGNLLRRGGAFFMRRTFKGNPLYTAVFNEYLHTLYTKGFPVEYFVEGGRSRTGRMLQPRTGMLAITLRSFLRSSRTPIVFVPVYIGYERVLEGRTYLGELRGASKKKESVLDIFKVFGALKQRFGQVYVNFGEPIRLAGFLDQQQPGWREQDHGPQYRPEWLNATTARLGETVARHLNEAAAINPVNLVALALLSTSRLALDERALTRVLDLYLALLRQVPYSPHTTLPEGDGQALIEHVRSMNLVAEQKDALGRILYLDEGNAVLMTYYRNNVLHIFALPALLASFFLSSSRMSRQLLGQYVHALYPYLQAELFLRWTPEQLDEVIDQWLVALVEQGLLRQDNDLYVRPAPSSRQFVLLTLLARTITQTLQRFYMATSLLINSGQNSLSAEALEDLCVMMAQRLSILHGLNAPEFFDKTLFRHFIQTLLQQGVLHADAQGKLSYHDKLGELAEGVAKRVLSAELRLSIRQVALHRDDGLETSTL.

An HXXXXD motif motif is present at residues 310–315; that stretch reads HRSHID.

It belongs to the GPAT/DAPAT family.

The protein resides in the cell inner membrane. It catalyses the reaction sn-glycerol 3-phosphate + an acyl-CoA = a 1-acyl-sn-glycero-3-phosphate + CoA. It participates in phospholipid metabolism; CDP-diacylglycerol biosynthesis; CDP-diacylglycerol from sn-glycerol 3-phosphate: step 1/3. This Pseudomonas putida (strain ATCC 47054 / DSM 6125 / CFBP 8728 / NCIMB 11950 / KT2440) protein is Glycerol-3-phosphate acyltransferase.